Consider the following 445-residue polypeptide: Phosphoglucosamine mutase (445 aa).

Ser-101 functions as the Phosphoserine intermediate in the catalytic mechanism. Positions 101, 240, 242, and 244 each coordinate Mg(2+). Phosphoserine is present on Ser-101.

Belongs to the phosphohexose mutase family. Mg(2+) is required as a cofactor. Activated by phosphorylation.

It catalyses the reaction alpha-D-glucosamine 1-phosphate = D-glucosamine 6-phosphate. In terms of biological role, catalyzes the conversion of glucosamine-6-phosphate to glucosamine-1-phosphate. The chain is Phosphoglucosamine mutase from Pseudomonas fluorescens (strain Pf0-1).